A 462-amino-acid chain; its full sequence is MGKTLFDKLWNRHVIYGKEGEPQLLYVDLHLIHEVTSPQAFEGLRMENRPLRRPDKTFATMDHNVPTEDIFNIQDLVAKKQIEALQTNCEEFGVTLADMGSDRQGIVHMVGPETGLTQPGKVIVCGDSHTATHGAFGAIGFGIGSSEVEHVFATQTIWQQKPKSMGIEINGKLPKGVYAKDIILHLIATYGVAFGTGYAVEYYGETIRNMSMEERMTICNMAIEGGAKMGMMAPDETTFEYVRGREYAPADMEKAIRDWKTLQTDPDAEYDLHIEMDASILEPYVTWGTNPEMGVPFSKAFPEIKDMNYERAYEYMGLKPGQTAEEIELGYVFIGSCTNARLSDLEEAARIVKGNKVKNNIRALVVPGSRQVRNAAESIGLDKIFIEAGFEWREPGCSMCLGMNPDQVPDGVHCASTSNRNFEGRQGKGARTHLVSPAMAAAAAINGHFIDIRKEAIISGGN.

Residues C337, C397, and C400 each contribute to the [4Fe-4S] cluster site.

It belongs to the aconitase/IPM isomerase family. LeuC type 1 subfamily. In terms of assembly, heterodimer of LeuC and LeuD. It depends on [4Fe-4S] cluster as a cofactor.

It catalyses the reaction (2R,3S)-3-isopropylmalate = (2S)-2-isopropylmalate. It functions in the pathway amino-acid biosynthesis; L-leucine biosynthesis; L-leucine from 3-methyl-2-oxobutanoate: step 2/4. Catalyzes the isomerization between 2-isopropylmalate and 3-isopropylmalate, via the formation of 2-isopropylmaleate. The sequence is that of 3-isopropylmalate dehydratase large subunit from Listeria monocytogenes serotype 4a (strain HCC23).